The chain runs to 152 residues: 3-hydroxyacyl-[acyl-carrier-protein] dehydratase FabZ (152 aa).

His58 is an active-site residue.

This sequence belongs to the thioester dehydratase family. FabZ subfamily.

The protein localises to the cytoplasm. The enzyme catalyses a (3R)-hydroxyacyl-[ACP] = a (2E)-enoyl-[ACP] + H2O. Functionally, involved in unsaturated fatty acids biosynthesis. Catalyzes the dehydration of short chain beta-hydroxyacyl-ACPs and long chain saturated and unsaturated beta-hydroxyacyl-ACPs. This Prochlorococcus marinus subsp. pastoris (strain CCMP1986 / NIES-2087 / MED4) protein is 3-hydroxyacyl-[acyl-carrier-protein] dehydratase FabZ.